The sequence spans 857 residues: Elongation factor 2 (857 aa).

Residues 17–362 form the tr-type G domain; it reads ANIRNMSVIA…MITIHLPSPV (346 aa). Position 26 to 33 (26 to 33) interacts with GTP; sequence AHVDHGKS. A phosphothreonine mark is found at Thr54, Thr57, and Thr59. The residue at position 152 (Lys152) is an N6-succinyllysine. Residues 158–161 and 216–218 each bind GTP; these read NKMD and SGL. Residue Lys235 is modified to N6-acetyllysine. Lys239 bears the N6-acetyllysine; alternate mark. A Glycyl lysine isopeptide (Lys-Gly) (interchain with G-Cter in SUMO1); alternate cross-link involves residue Lys239. The residue at position 265 (Tyr265) is a Phosphotyrosine. Lys272 is modified (N6-acetyllysine; alternate). Position 272 is an N6-succinyllysine; alternate (Lys272). At Lys275 the chain carries N6-acetyllysine. Lys322 is covalently cross-linked (Glycyl lysine isopeptide (Lys-Gly) (interchain with G-Cter in SUMO)). The residue at position 325 (Ser325) is a Phosphoserine. The residue at position 373 (Tyr373) is a Phosphotyrosine. Residue Thr435 is modified to Phosphothreonine. Residues Lys439 and Lys445 each carry the N6-acetyllysine modification. Ser502 carries the post-translational modification Phosphoserine. Position 525 is an N6,N6,N6-trimethyllysine (Lys525). Lys529 participates in a covalent cross-link: Glycyl lysine isopeptide (Lys-Gly) (interchain with G-Cter in SUMO). Lys572 carries the N6-succinyllysine modification. The residue at position 595 (Ser595) is a Phosphoserine. Lys619 is subject to N6-acetyllysine. His715 carries the diphthamide modification.

It belongs to the GTP-binding elongation factor family. EF-G/EF-2 subfamily. In terms of assembly, binds to 80S ribosomes. Actively translating ribosomes show mutually exclusive binding of eIF5a (EIF5A or EIF5A2) and EEF2/eEF2. Interacts with SERBP1; interaction sequesters EEF2/eEF2 at the A-site of the ribosome, thereby blocking the interaction sites of the mRNA-tRNA complex, promoting ribosome stabilization and hibernation. Interacts with HABP4; interaction takes place at the A-site of hibernating ribosomes and promotes ribosome stabilization. Component of the mRNA surveillance SURF complex, at least composed of ERF1, ERF3 (ERF3A or ERF3B), EEF2, UPF1/RENT1, SMG1, SMG8 and SMG9. Interacts with RBPMS2. Phosphorylation by EF-2 kinase completely inactivates EF-2; it requires prior phosphorylation by CDK2 at Ser-595 during mitotic prometaphase. Phosphorylation by CSK promotes SUMOylation, proteolytic cleavage, and nuclear translocation if the C-terminal fragment. Post-translationally, diphthamide is 2-[3-carboxyamido-3-(trimethyl-ammonio)propyl]histidine. In terms of processing, ISGylated. Proteolytically processed at two sites following phosphorylation by CSK. Post-translationally, SUMOylated following phosphorylation by CSK, promotes proteolytic cleavage.

The protein localises to the cytoplasm. The protein resides in the nucleus. The catalysed reaction is GTP + H2O = GDP + phosphate + H(+). Catalyzes the GTP-dependent ribosomal translocation step during translation elongation. During this step, the ribosome changes from the pre-translocational (PRE) to the post-translocational (POST) state as the newly formed A-site-bound peptidyl-tRNA and P-site-bound deacylated tRNA move to the P and E sites, respectively. Catalyzes the coordinated movement of the two tRNA molecules, the mRNA and conformational changes in the ribosome. In Oryctolagus cuniculus (Rabbit), this protein is Elongation factor 2 (EEF2).